The primary structure comprises 126 residues: Adenosine 5'-monophosphoramidase HINT1 (126 aa).

A2 is subject to N-acetylalanine. Residues 18 to 126 (IFGKIIRKEI…GGRQMNWPPG (109 aa)) enclose the HIT domain. N6-acetyllysine occurs at positions 21 and 30. AMP is bound at residue 43–44 (DI). Phosphoserine occurs at positions 45 and 72. AMP is bound by residues N99, 105–107 (GQS), and 112–114 (HLH). The short motif at 110-114 (HIHLH) is the Histidine triad motif element. The active-site Tele-AMP-histidine intermediate is H112.

This sequence belongs to the HINT family. In terms of assembly, homodimer. Interacts with CDK7. Interacts with RUVBL1 and RUVBL2 and is associated with the LEF1/TCF1-CTNNB1 complex and with a KAT5 histone acetyltransferase complex. Identified in a complex with MITF and CTNNB1. Interacts with CDC34 and RBX1, and is part of a SCF (SKP2-CUL1-F-box protein) E3 ubiquitin-protein ligase complex. Interacts with SUMO1, SUMO2 and RGS17. Interacts with the Ten-1 ICD form of TENM1. Interacts with CALM1; interaction increases in the presence of calcium ions.

The protein localises to the cytoplasm. The protein resides in the nucleus. The catalysed reaction is adenosine 5'-phosphoramidate + H2O = AMP + NH4(+). In terms of biological role, exhibits adenosine 5'-monophosphoramidase activity, hydrolyzing purine nucleotide phosphoramidates with a single phosphate group such as adenosine 5'monophosphoramidate (AMP-NH2) to yield AMP and NH2. Hydrolyzes adenosine 5'monophosphomorpholidate (AMP-morpholidate) and guanosine 5'monophosphomorpholidate (GMP-morpholidate). Hydrolyzes lysyl-AMP (AMP-N-epsilon-(N-alpha-acetyl lysine methyl ester)) generated by lysine tRNA ligase, as well as Met-AMP, His-AMP and Asp-AMP, lysyl-GMP (GMP-N-epsilon-(N-alpha-acetyl lysine methyl ester)) and AMP-N-alanine methyl ester. Can also convert adenosine 5'-O-phosphorothioate and guanosine 5'-O-phosphorothioate to the corresponding nucleoside 5'-O-phosphates with concomitant release of hydrogen sulfide. In addition, functions as a scaffolding protein that modulates transcriptional activation by the LEF1/TCF1-CTNNB1 complex and by the complex formed with MITF and CTNNB1. Modulates p53/TP53 levels and p53/TP53-mediated apoptosis. Modulates proteasomal degradation of target proteins by the SCF (SKP2-CUL1-F-box protein) E3 ubiquitin-protein ligase complex. Also exhibits SUMO-specific isopeptidase activity, deconjugating SUMO1 from RANGAP1 and RGS17. This chain is Adenosine 5'-monophosphoramidase HINT1 (Hint1), found in Rattus norvegicus (Rat).